The primary structure comprises 346 residues: Phosphate acyltransferase (346 aa).

The protein belongs to the PlsX family. Homodimer. Probably interacts with PlsY.

Its subcellular location is the cytoplasm. The enzyme catalyses a fatty acyl-[ACP] + phosphate = an acyl phosphate + holo-[ACP]. Its pathway is lipid metabolism; phospholipid metabolism. Catalyzes the reversible formation of acyl-phosphate (acyl-PO(4)) from acyl-[acyl-carrier-protein] (acyl-ACP). This enzyme utilizes acyl-ACP as fatty acyl donor, but not acyl-CoA. The polypeptide is Phosphate acyltransferase (Psychromonas ingrahamii (strain DSM 17664 / CCUG 51855 / 37)).